A 381-amino-acid polypeptide reads, in one-letter code: MPFSNTHNTLKLRFPAEDEFPDLSAHNNHMAKVLTPEMDAELRAKSTPSGFTLDDVIQTGVDNPGHPFIMTVGCVAGDEESYEAFKELFDPIIEDRHGGYKPSDEHKTDLNPDNLQGGDDLDPNYVLSSRVRTGRSIRGFCLPPHCSRGERRAVEKLAVEALSSLDGDLAGRYYALKSMTEAEQQQLIDDHFLFDKPVSPLLLASGMARDWPDARGIWHNDNKTFLVWINEEDHLRVISMQKGGNMKEVFTRFCNGLTQIETLFKSKNYEFMWNPHLGYILTCPSNLGTGLRAGVHIKLPHLGQHEKFSEVLKRLRLQKRGTGGVDTAAVGGVFDVSNADRLGFSEVELVQMVVDGVKLLIEMEQRLEQGQAIDDLMPAQK.

The residue at position 4 (Ser4) is a Phosphoserine. Residues 11–98 form the Phosphagen kinase N-terminal domain; that stretch reads KLRFPAEDEF…FDPIIEDRHG (88 aa). Position 35 is a phosphothreonine (Thr35). Lys45 participates in a covalent cross-link: Glycyl lysine isopeptide (Lys-Gly) (interchain with G-Cter in ubiquitin). A creatine-binding site is contributed by Val72. Basic and acidic residues predominate over residues 96–110; it reads RHGGYKPSDEHKTDL. A disordered region spans residues 96-123; it reads RHGGYKPSDEHKTDLNPDNLQGGDDLDP. Glycyl lysine isopeptide (Lys-Gly) (interchain with G-Cter in ubiquitin) cross-links involve residues Lys101 and Lys107. Position 125 is a phosphotyrosine (Tyr125). The region spanning 125-367 is the Phosphagen kinase C-terminal domain; sequence YVLSSRVRTG…KLLIEMEQRL (243 aa). ATP is bound by residues 128–132, Arg130, Arg132, and His191; that span reads SSRVR. The segment at 130 to 138 is internal MTS-like signal; the sequence is RVRTGRSIR. The residue at position 199 (Ser199) is a Phosphoserine. Glu232 contacts creatine. Arg236 contacts ATP. Tyr269 is subject to 3'-nitrotyrosine. Residue Ser285 coordinates creatine. Arg292 is a binding site for ATP. Ser309 carries the post-translational modification Phosphoserine. Residues Arg320, 320-325, and Asp335 contribute to the ATP site; that span reads RGTGGV. Thr322 bears the Phosphothreonine mark. Lys381 participates in a covalent cross-link: Glycyl lysine isopeptide (Lys-Gly) (interchain with G-Cter in ubiquitin).

It belongs to the ATP:guanido phosphotransferase family. In terms of assembly, dimer of identical or non-identical chains, which can be either B (brain type) or M (muscle type). With MM being the major form in skeletal muscle and myocardium, MB existing in myocardium, and BB existing in many tissues, especially brain. Interacts with SLC12A6 (via C-terminus); the interaction may be required for SLC12A6 potassium-chloride cotransport activity. In terms of processing, ubiquitinated by the ECS(ASB9) complex, leading to its degradation by the proteasome.

The protein resides in the cytoplasm. It is found in the cytosol. The protein localises to the mitochondrion. It localises to the cell membrane. It catalyses the reaction creatine + ATP = N-phosphocreatine + ADP + H(+). In terms of biological role, reversibly catalyzes the transfer of phosphate between ATP and various phosphogens (e.g. creatine phosphate). Creatine kinase isoenzymes play a central role in energy transduction in tissues with large, fluctuating energy demands, such as skeletal muscle, heart, brain and spermatozoa. Acts as a key regulator of adaptive thermogenesis as part of the futile creatine cycle: localizes to the mitochondria of thermogenic fat cells and acts by mediating phosphorylation of creatine to initiate a futile cycle of creatine phosphorylation and dephosphorylation. During the futile creatine cycle, creatine and N-phosphocreatine are in a futile cycle, which dissipates the high energy charge of N-phosphocreatine as heat without performing any mechanical or chemical work. The chain is Creatine kinase B-type (CKB) from Oryctolagus cuniculus (Rabbit).